The chain runs to 438 residues: ATP phosphoribosyltransferase regulatory subunit (438 aa).

Belongs to the class-II aminoacyl-tRNA synthetase family. HisZ subfamily. As to quaternary structure, heteromultimer composed of HisG and HisZ subunits.

It localises to the cytoplasm. Its pathway is amino-acid biosynthesis; L-histidine biosynthesis; L-histidine from 5-phospho-alpha-D-ribose 1-diphosphate: step 1/9. Functionally, required for the first step of histidine biosynthesis. May allow the feedback regulation of ATP phosphoribosyltransferase activity by histidine. The chain is ATP phosphoribosyltransferase regulatory subunit from Geobacter sulfurreducens (strain ATCC 51573 / DSM 12127 / PCA).